The chain runs to 210 residues: Secreted effector protein SteA (210 aa).

The protein resides in the secreted. Its subcellular location is the host cytoplasm. Its function is as follows. Effector proteins function to alter host cell physiology and promote bacterial survival in host tissues. Could be required for passage of bacteria from the peritoneal cavity into the spleen, for survival and replication within host cells, or for avoiding host immune response. This chain is Secreted effector protein SteA (steA), found in Salmonella typhimurium (strain 14028s / SGSC 2262).